Reading from the N-terminus, the 510-residue chain is Chromosomal replication initiator protein DnaA (510 aa).

The interval 1-74 (MHTDLWERGC…EATLSELAGK (74 aa)) is domain I, interacts with DnaA modulators. The tract at residues 74–173 (KPVRLELSLL…PTLSPAVSRG (100 aa)) is domain II. Positions 125–168 (ARHDPQSVVPTPGGSANGRAAPRVGEPGGPVGTSTLPVAPTLSP) are disordered. The interval 174 to 390 (RLNPALTFDT…GALRKVLAYS (217 aa)) is domain III, AAA+ region. ATP-binding residues include Gly-218, Gly-220, Lys-221, and Thr-222. The domain IV, binds dsDNA stretch occupies residues 391–510 (RFSHKEISIN…LHVLEQTLKG (120 aa)).

The protein belongs to the DnaA family. Oligomerizes as a right-handed, spiral filament on DNA at oriC.

The protein localises to the cytoplasm. Plays an essential role in the initiation and regulation of chromosomal replication. ATP-DnaA binds to the origin of replication (oriC) to initiate formation of the DNA replication initiation complex once per cell cycle. Binds the DnaA box (a 9 base pair repeat at the origin) and separates the double-stranded (ds)DNA. Forms a right-handed helical filament on oriC DNA; dsDNA binds to the exterior of the filament while single-stranded (ss)DNA is stabiized in the filament's interior. The ATP-DnaA-oriC complex binds and stabilizes one strand of the AT-rich DNA unwinding element (DUE), permitting loading of DNA polymerase. After initiation quickly degrades to an ADP-DnaA complex that is not apt for DNA replication. Binds acidic phospholipids. This Leptothrix cholodnii (strain ATCC 51168 / LMG 8142 / SP-6) (Leptothrix discophora (strain SP-6)) protein is Chromosomal replication initiator protein DnaA.